Here is a 190-residue protein sequence, read N- to C-terminus: B3 domain-containing protein Os02g0764100 (190 aa).

Positions 17–121 form a DNA-binding region, TF-B3; that stretch reads FEKAVTPSDV…KLLFIDCKKN (105 aa).

It localises to the nucleus. In Oryza sativa subsp. japonica (Rice), this protein is B3 domain-containing protein Os02g0764100.